The chain runs to 277 residues: Myelin proteolipid protein (277 aa).

Topologically, residues 2–10 are cytoplasmic; that stretch reads GLLECCARC. 3 S-palmitoyl cysteine lipidation sites follow: Cys6, Cys7, and Cys10. A helical transmembrane segment spans residues 11 to 36; it reads LIGAPFASLVATGLCFFGVALFCGCG. Residues 37 to 59 lie on the Extracellular side of the membrane; that stretch reads HEALTGTEQLIETYFSKNYQDYE. Residues 60 to 88 traverse the membrane as a helical segment; that stretch reads YLIDVIHAFQYVIYGTASFFFLYGALLLA. Topologically, residues 89–151 are cytoplasmic; sequence EGFYTTGAVR…LGKWLGHPDK (63 aa). Residues Cys109, Cys139, and Cys141 are each lipidated (S-palmitoyl cysteine). A helical transmembrane segment spans residues 152-178; that stretch reads FVGITYVLTIVWLLAFACSAVPVYIYF. The Extracellular segment spans residues 179–238; the sequence is NTWTTCQSIAFPTKTTASIGTLCADARMYGVLPWNAFPGKVCGSNLLSICKTSEFQMTFH. 2 disulfides stabilise this stretch: Cys184/Cys228 and Cys201/Cys220. Thr199 is lipidated: O-palmitoyl threonine. A helical transmembrane segment spans residues 239-268; it reads LFIAAFVGAAATLVSLLTFMIAATYNFAVL. At 269 to 277 the chain is on the cytoplasmic side; that stretch reads KLMGRGTKF.

This sequence belongs to the myelin proteolipid protein family.

Its subcellular location is the cell membrane. This is the major myelin protein from the central nervous system. It plays an important role in the formation or maintenance of the multilamellar structure of myelin. The sequence is that of Myelin proteolipid protein (PLP1) from Gallus gallus (Chicken).